The following is a 137-amino-acid chain: Large ribosomal subunit protein uL16 (137 aa).

The protein belongs to the universal ribosomal protein uL16 family. As to quaternary structure, part of the 50S ribosomal subunit.

Its function is as follows. Binds 23S rRNA and is also seen to make contacts with the A and possibly P site tRNAs. The protein is Large ribosomal subunit protein uL16 of Rhodopseudomonas palustris (strain BisB5).